The following is a 364-amino-acid chain: DNA polymerase IV (364 aa).

A UmuC domain is found at 14-198 (IIHIDMDAFF…LPIEKFHGVG (185 aa)). 2 residues coordinate Mg(2+): Asp-18 and Asp-116. Glu-117 is a catalytic residue.

This sequence belongs to the DNA polymerase type-Y family. As to quaternary structure, monomer. Mg(2+) serves as cofactor.

The protein localises to the cytoplasm. It catalyses the reaction DNA(n) + a 2'-deoxyribonucleoside 5'-triphosphate = DNA(n+1) + diphosphate. Functionally, poorly processive, error-prone DNA polymerase involved in untargeted mutagenesis. Copies undamaged DNA at stalled replication forks, which arise in vivo from mismatched or misaligned primer ends. These misaligned primers can be extended by PolIV. Exhibits no 3'-5' exonuclease (proofreading) activity. May be involved in translesional synthesis, in conjunction with the beta clamp from PolIII. The polypeptide is DNA polymerase IV (Streptococcus pyogenes serotype M4 (strain MGAS10750)).